A 137-amino-acid chain; its full sequence is Nucleoside diphosphate kinase (137 aa).

ATP is bound by residues lysine 9, phenylalanine 57, arginine 85, threonine 91, arginine 102, and asparagine 112. Histidine 115 (pros-phosphohistidine intermediate) is an active-site residue.

The protein belongs to the NDK family. In terms of assembly, homotetramer. Mg(2+) is required as a cofactor.

Its subcellular location is the cytoplasm. The catalysed reaction is a 2'-deoxyribonucleoside 5'-diphosphate + ATP = a 2'-deoxyribonucleoside 5'-triphosphate + ADP. It catalyses the reaction a ribonucleoside 5'-diphosphate + ATP = a ribonucleoside 5'-triphosphate + ADP. In terms of biological role, major role in the synthesis of nucleoside triphosphates other than ATP. The ATP gamma phosphate is transferred to the NDP beta phosphate via a ping-pong mechanism, using a phosphorylated active-site intermediate. The chain is Nucleoside diphosphate kinase from Campylobacter fetus subsp. fetus (strain 82-40).